The following is a 123-amino-acid chain: Iron-sulfur cluster insertion protein ErpA (123 aa).

Iron-sulfur cluster-binding residues include Cys51, Cys115, and Cys117.

The protein belongs to the HesB/IscA family. Homodimer. It depends on iron-sulfur cluster as a cofactor.

Required for insertion of 4Fe-4S clusters for at least IspG. The chain is Iron-sulfur cluster insertion protein ErpA from Halorhodospira halophila (strain DSM 244 / SL1) (Ectothiorhodospira halophila (strain DSM 244 / SL1)).